Consider the following 485-residue polypeptide: N-succinylglutamate 5-semialdehyde dehydrogenase (485 aa).

220–225 provides a ligand contact to NAD(+); the sequence is GSANTG. Active-site residues include E243 and C278.

This sequence belongs to the aldehyde dehydrogenase family. AstD subfamily.

It carries out the reaction N-succinyl-L-glutamate 5-semialdehyde + NAD(+) + H2O = N-succinyl-L-glutamate + NADH + 2 H(+). The protein operates within amino-acid degradation; L-arginine degradation via AST pathway; L-glutamate and succinate from L-arginine: step 4/5. Catalyzes the NAD-dependent reduction of succinylglutamate semialdehyde into succinylglutamate. This chain is N-succinylglutamate 5-semialdehyde dehydrogenase, found in Vibrio vulnificus (strain YJ016).